Here is a 418-residue protein sequence, read N- to C-terminus: EPS I polysaccharide export inner membrane protein EpsF (418 aa).

A run of 10 helical transmembrane segments spans residues 21–41 (VLVV…FPIA), 45–65 (CAAI…LATA), 142–162 (PLMV…IAIY), 170–190 (YVVF…GSAI), 222–242 (AGTH…MLFL), 262–282 (LLVL…EFVM), 296–316 (SAWE…AWLF), 326–346 (LTYF…PAVG), 347–367 (ARLF…FFFA), and 377–397 (KTLA…IVDV).

It to S.marcescens SfuB.

Its subcellular location is the cell inner membrane. Its function is as follows. Probably involved in polymerization and/or export of exopolysaccharide EPS I which functions as a virulence factor. May play a role in export of EPS I or its intermediates across the membranes. The polypeptide is EPS I polysaccharide export inner membrane protein EpsF (epsF) (Ralstonia solanacearum (Pseudomonas solanacearum)).